The sequence spans 37 residues: LQVSRDVWLLSQPHLRDDHHAKQLSDWCVSLFAARSP.

The protein belongs to the LysR transcriptional regulatory family.

Its function is as follows. Transcriptional activator of the mau genes involved in methylamine metabolism. This chain is Mau operon transcriptional activator (mauR), found in Paracoccus versutus (Thiobacillus versutus).